The sequence spans 186 residues: Peptidyl-tRNA hydrolase (186 aa).

Tyr-14 provides a ligand contact to tRNA. Catalysis depends on His-19, which acts as the Proton acceptor. TRNA is bound by residues Phe-64, Asn-66, and Asn-112.

The protein belongs to the PTH family. In terms of assembly, monomer.

The protein localises to the cytoplasm. It carries out the reaction an N-acyl-L-alpha-aminoacyl-tRNA + H2O = an N-acyl-L-amino acid + a tRNA + H(+). Functionally, hydrolyzes ribosome-free peptidyl-tRNAs (with 1 or more amino acids incorporated), which drop off the ribosome during protein synthesis, or as a result of ribosome stalling. Its function is as follows. Catalyzes the release of premature peptidyl moieties from peptidyl-tRNA molecules trapped in stalled 50S ribosomal subunits, and thus maintains levels of free tRNAs and 50S ribosomes. The chain is Peptidyl-tRNA hydrolase from Listeria monocytogenes serotype 4a (strain HCC23).